Here is a 194-residue protein sequence, read N- to C-terminus: Peptidyl-tRNA hydrolase (194 aa).

Tyr17 provides a ligand contact to tRNA. His22 functions as the Proton acceptor in the catalytic mechanism. 3 residues coordinate tRNA: Tyr68, Asn70, and Asn116.

It belongs to the PTH family. In terms of assembly, monomer.

The protein resides in the cytoplasm. It catalyses the reaction an N-acyl-L-alpha-aminoacyl-tRNA + H2O = an N-acyl-L-amino acid + a tRNA + H(+). Functionally, hydrolyzes ribosome-free peptidyl-tRNAs (with 1 or more amino acids incorporated), which drop off the ribosome during protein synthesis, or as a result of ribosome stalling. Its function is as follows. Catalyzes the release of premature peptidyl moieties from peptidyl-tRNA molecules trapped in stalled 50S ribosomal subunits, and thus maintains levels of free tRNAs and 50S ribosomes. The chain is Peptidyl-tRNA hydrolase from Pseudomonas fluorescens (strain ATCC BAA-477 / NRRL B-23932 / Pf-5).